The following is a 244-amino-acid chain: uncharacterized protein (244 aa).

This is an uncharacterized protein from Encephalitozoon cuniculi (strain GB-M1) (Microsporidian parasite).